The following is a 258-amino-acid chain: HLA class II histocompatibility antigen, DP beta 1 chain (258 aa).

An N-terminal signal peptide occupies residues 1 to 29 (MMVLQVSAAPRTVALTALLMVLLTSVVQG). The interval 30-121 (RATPENYLFQ…LGGPMTLQRR (92 aa)) is beta-1. Residues 30–225 (RATPENYLFQ…KAQSDSARSK (196 aa)) are Extracellular-facing. 2 disulfides stabilise this stretch: Cys44-Cys106 and Cys144-Cys200. A glycan (N-linked (GlcNAc...) asparagine) is linked at Asn48. A beta-2 region spans residues 122 to 215 (VQPRVNVSPS…SLDSPVTVEW (94 aa)). Residues 124–212 (PRVNVSPSKK…EHTSLDSPVT (89 aa)) enclose the Ig-like C1-type domain. Residues 216 to 225 (KAQSDSARSK) form a connecting peptide region. A helical transmembrane segment spans residues 226–246 (TLTGAGGFVLGLIICGVGIFM). Residues 247–258 (HRRSKKVQRGSA) lie on the Cytoplasmic side of the membrane.

The protein belongs to the MHC class II family. As to quaternary structure, heterodimer of an alpha and a beta subunit; also referred as MHC class II molecule. In the endoplasmic reticulum (ER) it forms a heterononamer; 3 MHC class II molecules bind to a CD74 homotrimer (also known as invariant chain or HLA class II histocompatibility antigen gamma chain). In the endosomal/lysosomal system; CD74 undergoes sequential degradation by various proteases; leaving a small fragment termed CLIP on each MHC class II molecule. MHC class II molecule interacts with HLA_DM, and HLA_DO in B-cells, in order to release CLIP and facilitate the binding of antigenic peptides.

The protein resides in the cell membrane. It localises to the endoplasmic reticulum membrane. The protein localises to the golgi apparatus. It is found in the trans-Golgi network membrane. Its subcellular location is the endosome membrane. The protein resides in the lysosome membrane. Its function is as follows. Binds peptides derived from antigens that access the endocytic route of antigen presenting cells (APC) and presents them on the cell surface for recognition by the CD4 T-cells. The peptide binding cleft accommodates peptides of 10-30 residues. The peptides presented by MHC class II molecules are generated mostly by degradation of proteins that access the endocytic route, where they are processed by lysosomal proteases and other hydrolases. Exogenous antigens that have been endocytosed by the APC are thus readily available for presentation via MHC II molecules, and for this reason this antigen presentation pathway is usually referred to as exogenous. As membrane proteins on their way to degradation in lysosomes as part of their normal turn-over are also contained in the endosomal/lysosomal compartments, exogenous antigens must compete with those derived from endogenous components. Autophagy is also a source of endogenous peptides, autophagosomes constitutively fuse with MHC class II loading compartments. In addition to APCs, other cells of the gastrointestinal tract, such as epithelial cells, express MHC class II molecules and CD74 and act as APCs, which is an unusual trait of the GI tract. To produce a MHC class II molecule that presents an antigen, three MHC class II molecules (heterodimers of an alpha and a beta chain) associate with a CD74 trimer in the ER to form a heterononamer. Soon after the entry of this complex into the endosomal/lysosomal system where antigen processing occurs, CD74 undergoes a sequential degradation by various proteases, including CTSS and CTSL, leaving a small fragment termed CLIP (class-II-associated invariant chain peptide). The removal of CLIP is facilitated by HLA-DM via direct binding to the alpha-beta-CLIP complex so that CLIP is released. HLA-DM stabilizes MHC class II molecules until primary high affinity antigenic peptides are bound. The MHC II molecule bound to a peptide is then transported to the cell membrane surface. In B-cells, the interaction between HLA-DM and MHC class II molecules is regulated by HLA-DO. Primary dendritic cells (DCs) also to express HLA-DO. Lysosomal microenvironment has been implicated in the regulation of antigen loading into MHC II molecules, increased acidification produces increased proteolysis and efficient peptide loading. The protein is HLA class II histocompatibility antigen, DP beta 1 chain (HLA-DPB1) of Homo sapiens (Human).